We begin with the raw amino-acid sequence, 470 residues long: Poly(A) polymerase catalytic subunit (470 aa).

Residues Asp-192 and Asp-194 contribute to the active site.

Belongs to the poxviridae poly(A) polymerase catalytic subunit family. In terms of assembly, heterodimer of a large (catalytic) subunit and a small (regulatory) subunit.

The enzyme catalyses RNA(n) + ATP = RNA(n)-3'-adenine ribonucleotide + diphosphate. Its function is as follows. Polymerase that creates the 3'-poly(A) tail of mRNA's. This Homo sapiens (Human) protein is Poly(A) polymerase catalytic subunit (PAPL).